The chain runs to 282 residues: 2-dehydro-3-deoxyphosphooctonate aldolase (282 aa).

It belongs to the KdsA family.

It localises to the cytoplasm. It catalyses the reaction D-arabinose 5-phosphate + phosphoenolpyruvate + H2O = 3-deoxy-alpha-D-manno-2-octulosonate-8-phosphate + phosphate. Its pathway is carbohydrate biosynthesis; 3-deoxy-D-manno-octulosonate biosynthesis; 3-deoxy-D-manno-octulosonate from D-ribulose 5-phosphate: step 2/3. It functions in the pathway bacterial outer membrane biogenesis; lipopolysaccharide biosynthesis. This is 2-dehydro-3-deoxyphosphooctonate aldolase from Bordetella avium (strain 197N).